We begin with the raw amino-acid sequence, 573 residues long: MTSQGPLYIGFDLSTQQLKGLVVNSELKVVHVSKFDFDADSHGFSIKKGVLTNEAEHEVFAPVALWLQALDGVLDGLRKQGLDFSRVKGISGAGQQHGSVYWGENAESLLKSLDSSKSLEEQLSGAFSHPFSPNWQDASTQKECDEFDAFLGGPEQLAEATGSKAHHRFTGPQILRMQRKYPEVYRKTARISLVSSFLASLLLGYIAPMDISDVCGMNLWDIKKGAYNEKLLGLCAGPFGAEDLKRKLGDVPEDGGLRLGKINRYFVERYGFSSNCEILPSTGDNPATILALPLRPSDAMVSLGTSTTFLMSTPSYKPDPATHFFNHPTTPGLYMFMLCYKNGGLAREHVRDAINEKSGSGASQSWESFDKIMLETPPMGQKTESGPMKMGLFFPRPEIVPNVRSGQWRFTYDPASDTLTETEDGWNKPSDEARAIVESQMLSLRLRSRGLTQSPGDGLPPQPRRVYLVGGGSKNKAIAKVAGEILGGSDGVYKLDVGDNACALGAAYKAVWAIERKPGQTFEDLIGQRWREEEFIEKIADGYQKGVFEKYGKAVEGFERMEQQVLKQEAARK.

The substrate site is built by His-97, Arg-168, Asp-284, and Asn-285. ATP contacts are provided by residues Trp-366, Gly-471 to Gly-472, and Asn-475.

This sequence belongs to the FGGY kinase family.

The protein localises to the cytoplasm. It catalyses the reaction D-xylulose + ATP = D-xylulose 5-phosphate + ADP + H(+). Highly specific D-xylulose kinase which participates in the catabolism of xylose. Xylose is a major component of hemicelluloses such as xylan. Most fungi utilize D-xylose via three enzymatic reactions, xylose reductase (XR), xylitol dehydrogenase (XDH), and xylulokinase, to form xylulose 5-phosphate, which enters pentose phosphate pathway. This Neosartorya fischeri (strain ATCC 1020 / DSM 3700 / CBS 544.65 / FGSC A1164 / JCM 1740 / NRRL 181 / WB 181) (Aspergillus fischerianus) protein is Probable D-xylulose kinase A (xkiA).